The sequence spans 302 residues: Recombination-associated protein RdgC (302 aa).

It belongs to the RdgC family.

Its subcellular location is the cytoplasm. It is found in the nucleoid. Functionally, may be involved in recombination. This Haemophilus influenzae (strain PittGG) protein is Recombination-associated protein RdgC.